A 408-amino-acid polypeptide reads, in one-letter code: Peptidase T-like protein RB0614 (408 aa).

Residue histidine 80 participates in Zn(2+) binding. Residue aspartate 82 is part of the active site. Aspartate 142 serves as a coordination point for Zn(2+). Glutamate 174 (proton acceptor) is an active-site residue. Positions 175, 198, and 380 each coordinate Zn(2+).

It belongs to the peptidase M20B family. The cofactor is Zn(2+).

The protein is Peptidase T-like protein RB0614 of Rhizobium meliloti (strain 1021) (Ensifer meliloti).